Here is a 255-residue protein sequence, read N- to C-terminus: 1-(5-phosphoribosyl)-5-[(5-phosphoribosylamino)methylideneamino] imidazole-4-carboxamide isomerase (255 aa).

Aspartate 8 serves as the catalytic Proton acceptor. Aspartate 129 serves as the catalytic Proton donor.

This sequence belongs to the HisA/HisF family.

It is found in the cytoplasm. The catalysed reaction is 1-(5-phospho-beta-D-ribosyl)-5-[(5-phospho-beta-D-ribosylamino)methylideneamino]imidazole-4-carboxamide = 5-[(5-phospho-1-deoxy-D-ribulos-1-ylimino)methylamino]-1-(5-phospho-beta-D-ribosyl)imidazole-4-carboxamide. Its pathway is amino-acid biosynthesis; L-histidine biosynthesis; L-histidine from 5-phospho-alpha-D-ribose 1-diphosphate: step 4/9. The polypeptide is 1-(5-phosphoribosyl)-5-[(5-phosphoribosylamino)methylideneamino] imidazole-4-carboxamide isomerase (Prochlorococcus marinus subsp. pastoris (strain CCMP1986 / NIES-2087 / MED4)).